Consider the following 657-residue polypeptide: MKNFEIVSKFSPSKDQQNAIENITASIKNGNKYQTLLGVTGSGKTFTMANIIKNLQMPALIMTHNKSLAAQLYSEFKGFFPKNHIEYFISYYDYYQPEAYIPRQDLFIEKDSSINDELERLRLSATASLLSFDDVVTIASVSANYGLGNPAEYQGMVLFLEINKKFSLKFLLRKLVDMGYSRNDTYFDRGDFRVNGDIIDIYPAYFNDEAIRLEFFGDELDDMYHFDVIENKKTQNLKKFILYPTSQFIVGENRLKEAIKGIENELGERLEFFNDNGKLVEAQRLKQRVDFDLEMLESTGMCKGIENYARYLTGQNAGETPYSLFDYYEIKGMDYLVIIDESHVSLPQFRGMYAGDRSRKETLVEYGFRLPSALDNRPLMFDEFINKRAKFLFVSATPNDYELELSKDHVYYQILRPTGLLDPEIVLKDSDNQVEILYDMAKEVIADNERVLVTVLTKKMAEELSKYYLELGLKVKYMHSDIDAIERNELIRGLRTGDFDMLIGINLLREGLDLPEVSLIAIMDADKEGFLRSRTSLIQTMGRAARNVNGKVVMFCKKITNSMKEAIEITQKRRKYQDEYNKTHNITPKSVSRNVEESLKLDDTEAIDRAMKAEKMPSSERAKIVKDLRKQMMEAADKLEFEKAAALRDEIKKMRKL.

A Helicase ATP-binding domain is found at 25–163 (ASIKNGNKYQ…QGMVLFLEIN (139 aa)). Position 38-45 (38-45 (GVTGSGKT)) interacts with ATP. The short motif at 91–114 (YYDYYQPEAYIPRQDLFIEKDSSI) is the Beta-hairpin element. Residues 130–133 (LSFD) carry the DEAD box motif. One can recognise a Helicase C-terminal domain in the interval 433–599 (QVEILYDMAK…SVSRNVEESL (167 aa)). One can recognise a UVR domain in the interval 622–657 (AKIVKDLRKQMMEAADKLEFEKAAALRDEIKKMRKL).

Belongs to the UvrB family. Forms a heterotetramer with UvrA during the search for lesions. Interacts with UvrC in an incision complex.

It localises to the cytoplasm. The UvrABC repair system catalyzes the recognition and processing of DNA lesions. A damage recognition complex composed of 2 UvrA and 2 UvrB subunits scans DNA for abnormalities. Upon binding of the UvrA(2)B(2) complex to a putative damaged site, the DNA wraps around one UvrB monomer. DNA wrap is dependent on ATP binding by UvrB and probably causes local melting of the DNA helix, facilitating insertion of UvrB beta-hairpin between the DNA strands. Then UvrB probes one DNA strand for the presence of a lesion. If a lesion is found the UvrA subunits dissociate and the UvrB-DNA preincision complex is formed. This complex is subsequently bound by UvrC and the second UvrB is released. If no lesion is found, the DNA wraps around the other UvrB subunit that will check the other stand for damage. The chain is UvrABC system protein B from Campylobacter hominis (strain ATCC BAA-381 / DSM 21671 / CCUG 45161 / LMG 19568 / NCTC 13146 / CH001A).